The primary structure comprises 955 residues: Mediator of RNA polymerase II transcription subunit 16 (955 aa).

A disordered region spans residues 855 to 874 (ALPETNANANANQNGKSSTQ). Residues 857-873 (PETNANANANQNGKSST) show a composition bias toward polar residues.

It belongs to the Mediator complex subunit 16 family. In terms of assembly, component of the Mediator complex.

It localises to the nucleus. Component of the Mediator complex, a coactivator involved in the regulated transcription of nearly all RNA polymerase II-dependent genes. Mediator functions as a bridge to convey information from gene-specific regulatory proteins to the basal RNA polymerase II transcription machinery. Mediator is recruited to promoters by direct interactions with regulatory proteins and serves as a scaffold for the assembly of a functional preinitiation complex with RNA polymerase II and the general transcription factors. This Aspergillus fumigatus (strain ATCC MYA-4609 / CBS 101355 / FGSC A1100 / Af293) (Neosartorya fumigata) protein is Mediator of RNA polymerase II transcription subunit 16 (sin4).